The primary structure comprises 290 residues: Ribosomal RNA small subunit methyltransferase A (290 aa).

N27, L29, G54, E75, D100, and N125 together coordinate S-adenosyl-L-methionine.

The protein belongs to the class I-like SAM-binding methyltransferase superfamily. rRNA adenine N(6)-methyltransferase family. RsmA subfamily.

It localises to the cytoplasm. The enzyme catalyses adenosine(1518)/adenosine(1519) in 16S rRNA + 4 S-adenosyl-L-methionine = N(6)-dimethyladenosine(1518)/N(6)-dimethyladenosine(1519) in 16S rRNA + 4 S-adenosyl-L-homocysteine + 4 H(+). Its function is as follows. Specifically dimethylates two adjacent adenosines (A1518 and A1519) in the loop of a conserved hairpin near the 3'-end of 16S rRNA in the 30S particle. May play a critical role in biogenesis of 30S subunits. The polypeptide is Ribosomal RNA small subunit methyltransferase A (Streptococcus equi subsp. zooepidemicus (strain H70)).